The primary structure comprises 357 residues: SrfA-induced gene J protein (357 aa).

Residues 1 to 29 (MGRVEDQIKDNYNSLSHEGERLNREAKIE) are disordered. Residues 5-51 (EDQIKDNYNSLSHEGERLNREAKIESEKLKNNAKLDAKDMKKDIDES) adopt a coiled-coil conformation. A compositionally biased stretch (basic and acidic residues) spans 17–29 (HEGERLNREAKIE). N-linked (GlcNAc...) asparagine glycosylation is found at Asn-114, Asn-157, and Asn-172. Coiled coils occupy residues 150–177 (KNFK…SNKI) and 223–270 (DETK…DAIE). A helical membrane pass occupies residues 290 to 307 (IWGSIGLIGGATATSYLF).

Its subcellular location is the membrane. The protein is SrfA-induced gene J protein (sigJ) of Dictyostelium discoideum (Social amoeba).